A 349-amino-acid polypeptide reads, in one-letter code: N-acetyltaurine hydrolase (349 aa).

Residues His26, His28, Glu169, His201, His230, and Asp298 each contribute to the a divalent metal cation site.

Belongs to the metallo-dependent hydrolases superfamily. Phosphotriesterase family. A divalent metal cation serves as cofactor.

It localises to the cytoplasm. It is found in the cytosol. It carries out the reaction N-acetyltaurine + H2O = taurine + acetate. The enzyme catalyses N-propanoyltaurine + H2O = propanoate + taurine. The catalysed reaction is N-acetyl-L-methionine + H2O = L-methionine + acetate. It catalyses the reaction N-acetyl-L-isoleucine + H2O = L-isoleucine + acetate. It carries out the reaction N-acetyl-L-leucine + H2O = L-leucine + acetate. The enzyme catalyses N-acetyl-L-valine + H2O = L-valine + acetate. Its function is as follows. N-acetyltaurine hydrolase that regulates feeding by catalyzing the hydrolysis of N-acetyltaurine into taurine and acetate. N-acetyltaurine has anorexigenic and anti-obesity effects that are dependent on GFRAL receptor and GDF15. PTER also acts on other N-acetyl amino acids (Met, Ile, Leu, Val) and N-propionyltaurine, but at lower rates. This Pongo abelii (Sumatran orangutan) protein is N-acetyltaurine hydrolase.